We begin with the raw amino-acid sequence, 233 residues long: Delta-actitoxin-Amc1a (233 aa).

The first 18 residues, M1 to A18, serve as a signal peptide directing secretion. Propeptides lie at residues K19–R29 and E30–P33. At P39 the chain carries Hydroxyproline. Disulfide bonds link C40/C51 and C43/C58. Propeptides lie at residues R61–R63 and E64–P67. At P73 the chain carries Hydroxyproline. 2 disulfides stabilise this stretch: C74–C85 and C77–C92. 2 consecutive propeptides follow at residues R95–R97 and E98–P101. P107 is modified (hydroxyproline). 2 disulfide bridges follow: C108/C119 and C111/C126. 2 propeptides span residues R129–R131 and E132–P135. P141 is modified (hydroxyproline). 2 cysteine pairs are disulfide-bonded: C142-C153 and C145-C160. 2 consecutive propeptides follow at residues R163–R165 and E166–P169. At P175 the chain carries Hydroxyproline. Cystine bridges form between C176/C187 and C179/C194. Propeptides lie at residues R197–R199 and E200–P203. A Hydroxyproline modification is found at P209. 2 disulfide bridges follow: C210/C221 and C213/C228. Residues R231 to R233 constitute a propeptide that is removed on maturation.

The protein belongs to the sea anemone BBH family. Post-translationally, each Am I peptide may contain 2 disulfide bonds. In terms of processing, the precursor protein seems to be processed in the following sequence: release of the signal peptide and of the propeptide, production of six identical 34-residue peptides by cleavage between Arg and Glu, release of four N-terminal and three C-terminal residues from each peptide and hydroxylation of each Pro in position 6 of the resulting 27-residue peptides.

The protein resides in the secreted. Its subcellular location is the nematocyst. May inhibit voltage-gated sodium channels (Nav). The sequence is that of Delta-actitoxin-Amc1a from Antheopsis maculata (Sea anemone).